A 217-amino-acid chain; its full sequence is Large ribosomal subunit protein uL3 (217 aa).

The segment at 137–160 is disordered; that stretch reads VSASHGSHRNHRKPGSIGASSTPS.

The protein belongs to the universal ribosomal protein uL3 family. In terms of assembly, part of the 50S ribosomal subunit. Forms a cluster with proteins L14 and L19.

In terms of biological role, one of the primary rRNA binding proteins, it binds directly near the 3'-end of the 23S rRNA, where it nucleates assembly of the 50S subunit. This Clavibacter michiganensis subsp. michiganensis (strain NCPPB 382) protein is Large ribosomal subunit protein uL3.